A 585-amino-acid polypeptide reads, in one-letter code: FAD-linked oxidoreductase apf9 (585 aa).

An N-terminal signal peptide occupies residues 1 to 19 (MKPHTVSLVLSNLASLAAA). Residues asparagine 40, asparagine 92, and asparagine 117 are each glycosylated (N-linked (GlcNAc...) asparagine). Positions 108–294 (IGNSPVYVVN…TEITVKTYPT (187 aa)) constitute an FAD-binding PCMH-type domain. A Pros-8alpha-FAD histidine modification is found at histidine 145. Residues asparagine 352, asparagine 412, and asparagine 495 are each glycosylated (N-linked (GlcNAc...) asparagine).

It belongs to the oxygen-dependent FAD-linked oxidoreductase family. The cofactor is FAD.

Its pathway is secondary metabolite biosynthesis. Functionally, FAD-linked oxidoreductase; part of the gene cluster that mediates the biosynthesis of the cyclic tetrapeptide apicidin F (APF). The non-ribosomal peptide synthetase apf1 incorporates four different amino acids to produce apicidin F: L-phenylalanine, D-pipecolic acid (D-pip), N-methoxy-L-tryptophan and L-2-aminooctanedioic acid. L-Phenylalanine is the only proteinogenic amino acid directly used by apf1. The 3 other apf1 substrates are non-proteinogenic and have to be modified by other enzymes of the cluster. Lysine is converted to delta-1-pyrroline-5-carboxylate (P5C) which is reduced to L-pipecolic acid (L-pip) by apf3. L-pip is epimerized to D-pip, probably by apf1 activity, prior to incorporation. L-Tryptophan is N-oxidyzed by one of the cytochrome P450 monooxygenases (apf7 or apf8), and further methylated at the hydroxy group by the O-methyltransferase apf6 to yield N-methoxy-L-tryptophan. The synthesis of the fourth apf1 substrate is more complex. The fatty acid synthase apf5 is involved in the synthesis of the octanoic acid backbone of L-2-aminooctanedioic acid by fixing one acetyl-CoA unit and three malonyl-CoA units. Then one of the cytochrome P450 monooxygenases (apf7 or apf8) may oxidize this backbone to 2-oxooctanoic acid. The aminotransferase apf4 is predicted to catalyze the exchange of the keto group with an amino group. The next step would be the oxidation of 2-aminooctanoic acid by one of the cytochrome P450 monooxygenases (apf7 or apf8). The last step is the oxidation of 2-amino-8-hydroxyoctanoic acid to 2-aminooctanedioic acid is catalyzed by the FAD-dependent monooxygenase apf9. The sequence is that of FAD-linked oxidoreductase apf9 from Gibberella fujikuroi (strain CBS 195.34 / IMI 58289 / NRRL A-6831) (Bakanae and foot rot disease fungus).